We begin with the raw amino-acid sequence, 314 residues long: tRNA pseudouridine synthase B (314 aa).

Position 43 (His43) interacts with substrate. Residue Asp48 is the Nucleophile of the active site. The substrate site is built by Tyr76, Tyr179, and Leu200.

Belongs to the pseudouridine synthase TruB family. Type 1 subfamily.

The catalysed reaction is uridine(55) in tRNA = pseudouridine(55) in tRNA. Responsible for synthesis of pseudouridine from uracil-55 in the psi GC loop of transfer RNAs. This is tRNA pseudouridine synthase B from Cronobacter sakazakii (strain ATCC BAA-894) (Enterobacter sakazakii).